A 153-amino-acid chain; its full sequence is NADH dehydrogenase [ubiquinone] 1 beta subcomplex subunit 11, mitochondrial (153 aa).

Residues 1–29 (MAAGLFGLSARLLLAAAATRGLPAARVRW) constitute a mitochondrion transit peptide. Positions 40-77 (PSAVAGKRPPEPTTQWQEDPEPEDENLYEKNPDSHGYD) are disordered. Residues 66 to 77 (LYEKNPDSHGYD) show a composition bias toward basic and acidic residues. A helical transmembrane segment spans residues 89-109 (LVFFFGVSIILVLGSTFVAYL).

It belongs to the complex I NDUFB11 subunit family. In terms of assembly, complex I is composed of 45 different subunits. Interacts with BCAP31.

Its subcellular location is the mitochondrion inner membrane. In terms of biological role, accessory subunit of the mitochondrial membrane respiratory chain NADH dehydrogenase (Complex I), that is believed not to be involved in catalysis. Complex I functions in the transfer of electrons from NADH to the respiratory chain. The immediate electron acceptor for the enzyme is believed to be ubiquinone. This chain is NADH dehydrogenase [ubiquinone] 1 beta subcomplex subunit 11, mitochondrial (NDUFB11), found in Pan troglodytes (Chimpanzee).